Reading from the N-terminus, the 416-residue chain is Gasdermin-B (416 aa).

The tract at residues 1–280 (MFSVFEEITR…EKRKDVLNSL (280 aa)) is triggers pyroptosis. Transmembrane regions (beta stranded) follow at residues 83–101 (EFQI…VRLP) and 102–125 (KEIT…ENRI). (Microbial infection) Glycyl lysine isopeptide (Lys-Gly) (interchain with G-Cter in ubiquitin) cross-links involve residues Lys166, Lys177, Lys190, and Lys192. Transmembrane regions (beta stranded) follow at residues 167–183 (EETL…SQIS) and 184–198 (QGHL…REVT). Residues 229 to 250 (KSFPEEKDGASSCLGKSLGSED) form a disordered region. Positions 248 to 276 (SEDSRNMKEKLEDMESVLKDLTEEKRKDV) form a coiled coil. Met308 is covalently cross-linked ((Microbial infection) Glycyl lysine isopeptide (Lys-Gly) (interchain with G-Cter in ubiquitin)).

It belongs to the gasdermin family. As to quaternary structure, homooligomer; homooligomeric ring-shaped pore complex containing 24-26 subunits when inserted in the membrane. Cleavage by granzyme A (GZMA) relieves autoinhibition by releasing the N-terminal moiety (Gasdermin-B, N-terminal) that initiates pyroptosis. Not cleaved by other granzymes. Major cleavage site takes places after Lys-244; a minor cleavage site takes place after Lys-229. Cleavage by neutrophil elastase ELANE, inhibits its ability to trigger pyroptosis. Post-translationally, palmitoylated. In terms of processing, (Microbial infection) Ubiquitinated by S.flexneri IpaH7.8, leading to its degradation by the proteasome, thereby preventing its ability to form pores in bacterial-derived membranes. In the gastrointestinal tract, expressed in proliferating cells, including in the basal cell layer of esophagus and in isthmus/neck of stomach.

The protein resides in the cytoplasm. The protein localises to the cell membrane. The full-length protein before cleavage is inactive: intramolecular interactions between N- and C-terminal domains mediate autoinhibition in the absence of activation signal. The intrinsic pyroptosis-inducing activity is carried by the released N-terminal moiety (Gasdermin-B, N-terminal) following cleavage by granzyme A (GZMA). Precursor of a pore-forming protein that acts as a downstream mediator of granzyme-mediated cell death. This form constitutes the precursor of the pore-forming protein: upon cleavage, the released N-terminal moiety (Gasdermin-B, N-terminal) binds to membranes and forms pores, triggering pyroptosis. Also acts as a regulator of epithelial cell repair independently of programmed cell death: translocates to the plasma membrane and promotes epithelial maintenance and repair by regulating PTK2/FAK-mediated phosphorylation of PDGFA. Its function is as follows. Pore-forming protein produced by cleavage by granzyme A (GZMA), which causes membrane permeabilization and pyroptosis in target cells of cytotoxic T and natural killer (NK) cells. Key downstream mediator of granzyme-mediated cell death: (1) granzyme A (GZMA), delivered to target cells from cytotoxic T- and NK-cells, (2) specifically cleaves Gasdermin-B to generate this form. After cleavage, moves to the plasma membrane, homooligomerizes within the membrane and forms pores of 10-15 nanometers (nm) of inner diameter, triggering pyroptosis. The different isoforms recognize and bind different phospholipids on membranes, promoting cell death of different target cells. In terms of biological role, precursor of a pore-forming protein that acts as a downstream mediator of granzyme-mediated cell death and mediates pyroptosis. Following cleavage and activation by granzyme A (GZMA), the N-terminal part binds to membrane inner leaflet lipids, homooligomerizes within the human plasma membrane and forms pores of 10-15 nanometers (nm) of inner diameter, triggering pyroptosis. Recognizes and binds membrane inner leaflet lipids of human cells, such as phosphatidylinositol 4-phosphate, phosphatidylinositol 5-phosphate, bisphosphorylated phosphatidylinositols, such as phosphatidylinositol (4,5)-bisphosphate, and more weakly to phosphatidic acid. Also binds sufatide, a component of the apical membrane of epithelial cells. Functionally, precursor of a pore-forming protein that acts as a downstream mediator of granzyme-mediated cell death and mediates pyroptosis of human cells. Following cleavage and activation by granzyme A (GZMA), the N-terminal part binds to membrane inner leaflet lipids, homooligomerizes within the human plasma membrane and forms pores of 10-15 nanometers (nm) of inner diameter, triggering pyroptosis. Precursor of a pore-forming protein that acts as a downstream mediator of granzyme-mediated cell death and specifically mediates cell death of Gram-negative bacteria in response to infection. Following cleavage and activation by granzyme A (GZMA), the N-terminal part recognizes and binds phospholipids found on Gram-negative bacterial membranes, such as lipid A and cariolipin, homooligomerizes within the bacterial membranes and forms pores, triggering pyroptosis followed by cell death. In contrast to isoform 4, does not bind to membrane inner leaflet lipids of host human cell, such as phosphatidylinositol 4-phosphate, phosphatidylinositol 5-phosphate, bisphosphorylated phosphatidylinositols, such as phosphatidylinositol (4,5)-bisphosphate. Its function is as follows. Not able to trigger pyroptosis. In Homo sapiens (Human), this protein is Gasdermin-B.